Consider the following 66-residue polypeptide: Small ribosomal subunit protein bS21 (66 aa).

Belongs to the bacterial ribosomal protein bS21 family.

In Maridesulfovibrio salexigens (strain ATCC 14822 / DSM 2638 / NCIMB 8403 / VKM B-1763) (Desulfovibrio salexigens), this protein is Small ribosomal subunit protein bS21.